Here is a 228-residue protein sequence, read N- to C-terminus: Cytidylate kinase (228 aa).

17 to 25 serves as a coordination point for ATP; it reads GPTASGKGT.

It belongs to the cytidylate kinase family. Type 1 subfamily.

The protein localises to the cytoplasm. It carries out the reaction CMP + ATP = CDP + ADP. The catalysed reaction is dCMP + ATP = dCDP + ADP. The chain is Cytidylate kinase from Burkholderia cenocepacia (strain HI2424).